The chain runs to 173 residues: Shikimate kinase 1 (173 aa).

Residue 14-19 (GAGKST) participates in ATP binding. S18 contributes to the Mg(2+) binding site. Positions 36, 60, and 82 each coordinate substrate. An ATP-binding site is contributed by R120. R140 is a binding site for substrate. Q157 contacts ATP.

Belongs to the shikimate kinase family. In terms of assembly, monomer. It depends on Mg(2+) as a cofactor.

It localises to the cytoplasm. The enzyme catalyses shikimate + ATP = 3-phosphoshikimate + ADP + H(+). It participates in metabolic intermediate biosynthesis; chorismate biosynthesis; chorismate from D-erythrose 4-phosphate and phosphoenolpyruvate: step 5/7. In terms of biological role, catalyzes the specific phosphorylation of the 3-hydroxyl group of shikimic acid using ATP as a cosubstrate. This is Shikimate kinase 1 from Pectobacterium atrosepticum (strain SCRI 1043 / ATCC BAA-672) (Erwinia carotovora subsp. atroseptica).